The primary structure comprises 32 residues: Photosystem I reaction center subunit XII (32 aa).

The helical transmembrane segment at 10-27 (VVALVSAFVTGILALRLG) threads the bilayer.

Belongs to the PsaM family.

It localises to the plastid. It is found in the chloroplast thylakoid membrane. In Staurastrum punctulatum (Green alga), this protein is Photosystem I reaction center subunit XII.